We begin with the raw amino-acid sequence, 303 residues long: MDALELKNIISDGLLSFPVTDFDQNGDFNKSSYAKRLEWLAPYGASALFAAGGTGEFFSLTGNEYSEVIKTAVDICKGSVPIIAGAGGPTRQAIEQAKEAERLGAHGILLMPHYLTEASQEGLIEHVKQVCNSVDFGVIFYNRSVSRLNLDSIQKLTEMCPNLIGFKDSSGQIDMMTAVTQTIGDRLSYLGGLPTAEVFAAPYKALGCPVYSSAVFNFIPKTAMEFYNALRSDDFETTNRLIKDFFLPLIKIRDRKSGYAVSMIKAGAKIVGHDAGPVRPPLSDLTQADYEDLAALIATLGPQ.

It belongs to the DapA family.

The enzyme catalyses 5-dehydro-4-deoxy-D-glucarate + H(+) = 2,5-dioxopentanoate + CO2 + H2O. The protein operates within carbohydrate acid metabolism; D-glucarate degradation; 2,5-dioxopentanoate from D-glucarate: step 2/2. The sequence is that of Probable 5-dehydro-4-deoxyglucarate dehydratase from Acinetobacter baumannii (strain SDF).